A 510-amino-acid chain; its full sequence is ATP synthase subunit alpha 1 (510 aa).

167–174 serves as a coordination point for ATP; that stretch reads GDRATGKT.

This sequence belongs to the ATPase alpha/beta chains family. As to quaternary structure, F-type ATPases have 2 components, CF(1) - the catalytic core - and CF(0) - the membrane proton channel. CF(1) has five subunits: alpha(3), beta(3), gamma(1), delta(1), epsilon(1). CF(0) has three main subunits: a(1), b(2) and c(9-12). The alpha and beta chains form an alternating ring which encloses part of the gamma chain. CF(1) is attached to CF(0) by a central stalk formed by the gamma and epsilon chains, while a peripheral stalk is formed by the delta and b chains.

The protein localises to the cell inner membrane. It carries out the reaction ATP + H2O + 4 H(+)(in) = ADP + phosphate + 5 H(+)(out). Produces ATP from ADP in the presence of a proton gradient across the membrane. The alpha chain is a regulatory subunit. The polypeptide is ATP synthase subunit alpha 1 (Paraburkholderia xenovorans (strain LB400)).